Here is a 336-residue protein sequence, read N- to C-terminus: Telomere-binding protein cav (336 aa).

A required for binding to Su(var)205 region spans residues 107–328; it reads RKKMVQPYPE…TITFQNSESE (222 aa). Disordered regions lie at residues 137 to 158 and 199 to 218; these read RLDR…SPAR and SSDL…SEFQ. 2 short sequence motifs (su(var)205-binding Pro-containing repeat) span residues 225 to 231 and 289 to 295; these read PETAINE and PETEMNE. Over residues 308–327 the composition is skewed to polar residues; that stretch reads MSIGPSIDSEGTITFQNSES. Residues 308-336 form a disordered region; it reads MSIGPSIDSEGTITFQNSESEPIDVDSIA.

Interacts (via C-terminus) with Su(var)205 dimer (via hinge and chromoshadow domain) and with moi to form the terminin, telomere-capping, complex. Interacts with HP6, which is also part of the terminin complex.

It localises to the nucleus. Its subcellular location is the chromosome. It is found in the telomere. Binds to chromosome ends in a sequence-dependent manner and is required for telomere capping. The chain is Telomere-binding protein cav from Drosophila sechellia (Fruit fly).